Reading from the N-terminus, the 340-residue chain is Oxygen-dependent coproporphyrinogen-III oxidase (340 aa).

Positions 1–14 (MTVSPTTQPQTNHS) are enriched in polar residues. The tract at residues 1–22 (MTVSPTTQPQTNHSLPPADAKQ) is disordered. Residue Ser109 participates in substrate binding. 2 residues coordinate a divalent metal cation: His113 and His123. His123 serves as the catalytic Proton donor. 125-127 (NYR) is a substrate binding site. Residues His157 and His187 each contribute to the a divalent metal cation site. An important for dimerization region spans residues 278-313 (YVEFNLVYDRGTIFGLQTNGRTESILMSLPPLVRWQ). Position 296 to 298 (296 to 298 (NGR)) interacts with substrate.

This sequence belongs to the aerobic coproporphyrinogen-III oxidase family. Homodimer. A divalent metal cation serves as cofactor.

The protein localises to the cytoplasm. It carries out the reaction coproporphyrinogen III + O2 + 2 H(+) = protoporphyrinogen IX + 2 CO2 + 2 H2O. It participates in porphyrin-containing compound metabolism; protoporphyrin-IX biosynthesis; protoporphyrinogen-IX from coproporphyrinogen-III (O2 route): step 1/1. In terms of biological role, involved in the heme and chlorophyll biosynthesis. Catalyzes the aerobic oxidative decarboxylation of propionate groups of rings A and B of coproporphyrinogen-III to yield the vinyl groups in protoporphyrinogen-IX. In Synechocystis sp. (strain ATCC 27184 / PCC 6803 / Kazusa), this protein is Oxygen-dependent coproporphyrinogen-III oxidase.